The primary structure comprises 356 residues: Alanine racemase (356 aa).

Catalysis depends on Lys34, which acts as the Proton acceptor; specific for D-alanine. Residue Lys34 is modified to N6-(pyridoxal phosphate)lysine. Arg129 contacts substrate. Tyr253 functions as the Proton acceptor; specific for L-alanine in the catalytic mechanism. Met301 serves as a coordination point for substrate.

This sequence belongs to the alanine racemase family. Pyridoxal 5'-phosphate is required as a cofactor.

The catalysed reaction is L-alanine = D-alanine. It participates in amino-acid biosynthesis; D-alanine biosynthesis; D-alanine from L-alanine: step 1/1. In terms of biological role, catalyzes the interconversion of L-alanine and D-alanine. May also act on other amino acids. This is Alanine racemase (alr) from Nitrosococcus oceani (strain ATCC 19707 / BCRC 17464 / JCM 30415 / NCIMB 11848 / C-107).